A 174-amino-acid polypeptide reads, in one-letter code: Crossover junction endodeoxyribonuclease RuvC (174 aa).

Active-site residues include Asp8, Glu67, and Asp139. Positions 8, 67, and 139 each coordinate Mg(2+).

The protein belongs to the RuvC family. Homodimer which binds Holliday junction (HJ) DNA. The HJ becomes 2-fold symmetrical on binding to RuvC with unstacked arms; it has a different conformation from HJ DNA in complex with RuvA. In the full resolvosome a probable DNA-RuvA(4)-RuvB(12)-RuvC(2) complex forms which resolves the HJ. The cofactor is Mg(2+).

The protein localises to the cytoplasm. It carries out the reaction Endonucleolytic cleavage at a junction such as a reciprocal single-stranded crossover between two homologous DNA duplexes (Holliday junction).. In terms of biological role, the RuvA-RuvB-RuvC complex processes Holliday junction (HJ) DNA during genetic recombination and DNA repair. Endonuclease that resolves HJ intermediates. Cleaves cruciform DNA by making single-stranded nicks across the HJ at symmetrical positions within the homologous arms, yielding a 5'-phosphate and a 3'-hydroxyl group; requires a central core of homology in the junction. The consensus cleavage sequence is 5'-(A/T)TT(C/G)-3'. Cleavage occurs on the 3'-side of the TT dinucleotide at the point of strand exchange. HJ branch migration catalyzed by RuvA-RuvB allows RuvC to scan DNA until it finds its consensus sequence, where it cleaves and resolves the cruciform DNA. The chain is Crossover junction endodeoxyribonuclease RuvC from Pseudomonas putida (strain GB-1).